The primary structure comprises 240 residues: MKVKKGGGGAGTGAEPASGAPGPSVEPKPEPQAESESGSESEPEAGPGPRPGPLQRKQRIGPEDVLGLQRITGDYLCSPEENIYKIDFIRFKIRDMDSGTVLFEIKKPPASERLPINRRDLDPNAGRFVRYQFTPAFLRLRQVGATVEFTVGDKPVNNFRMIERHYFRNQLLKSFDFHFGFCIPSSKNTCEHIYDFPPLSEELINEMIRHPYETQSDSFYFVDDRLVMHNKADYSYSGTP.

Positions Met-1–Thr-12 are enriched in gly residues. Positions Met-1–Gly-61 are disordered. Residues Gly-13–Pro-23 show a composition bias toward low complexity. Phosphoserine; by CK2 is present on residues Ser-37, Ser-39, and Ser-41. Tyr-131 lines the tetradecanoate pocket.

The protein belongs to the PDE6D/unc-119 family. As to quaternary structure, interacts with CABP4; in the absence of calcium. May interact with GTP-bound ARL1. Interacts with ARL2 and ARL3 (GTP-bound forms); this promotes the release of myristoylated cargo proteins. Found in a complex with ARL3, RP2 and UNC119; RP2 induces hydrolysis of GTP ARL3 in the complex, leading to the release of UNC119. Interacts with NPHP3 (when myristoylated). Interacts with CYS1 (when myristoylated). Interacts with MACIR; interaction only takes place when UNC119 is not liganded with myristoylated proteins. Interacts with LCK; this interaction plays a crucial role in activation of LCK. Interacts with FYN. Interacts with RAB11A; in a cell cycle-dependent manner. Interacts with LYN (via SH2 and SH3 domains); leading to LYN activation. Interacts with DNM1; leading to a decrease of DNM1 GTPase activity. Found in a complex with ABL1, ABL2, CRK and UNC119; leading to the inhibition of CRK phosphorylation by ABL kinases. Interacts with CD44. Interacts with KLHL18 (via kelch repeats). Interacts with PPP3CA, PPP3CB and PPP3CC. Interacts with USP48; this interaction promotes UNC119 stability. Post-translationally, phosphorylation suppresses its interaction with KLHL18 and down-regulates its KLHL18-mediated degradation. Phosphorylated more under light conditions than dark conditions. Dephosphorylated by calcineurin.

It localises to the cytoplasm. Its subcellular location is the cytoskeleton. It is found in the microtubule organizing center. The protein localises to the centrosome. The protein resides in the spindle. It localises to the spindle pole. Functionally, involved in synaptic functions in photoreceptor cells, the signal transduction in immune cells as a Src family kinase activator, endosome recycling, the uptake of bacteria and endocytosis, protein trafficking in sensory neurons and as lipid-binding chaperone with specificity for a diverse subset of myristoylated proteins. Specifically binds the myristoyl moiety of a subset of N-terminally myristoylated proteins and is required for their localization. Binds myristoylated GNAT1 and is required for G-protein localization and trafficking in sensory neurons. Probably plays a role in trafficking proteins in photoreceptor cells. Plays important roles in mediating Src family kinase signals for the completion of cytokinesis via RAB11A. The polypeptide is Protein unc-119 homolog A (UNC119) (Canis lupus familiaris (Dog)).